A 307-amino-acid polypeptide reads, in one-letter code: Polysialic acid O-acetyltransferase (307 aa).

Residues 1-90 (MLRLKTQDSR…LKTQDSRLKT (90 aa)) show a composition bias toward basic and acidic residues. A disordered region spans residues 1–95 (MLRLKTQDSR…SRLKTQDSFS (95 aa)). 13 consecutive repeat copies span residues 3–9 (RLKTQDS), 10–16 (RLKTQDS), 17–23 (RLKTQDS), 24–30 (RLKTQDS), 31–37 (RLKTQDS), 38–44 (RLKTQDS), 45–51 (RLKTQDS), 52–58 (RLKTQDS), 59–65 (RLKTQDS), 66–72 (RLKTQDS), 73–79 (RLKTQDS), 80–86 (RLKTQDS), and 87–93 (RLKTQDS). The 13 X 7 AA tandem repeat of RLKTQDS encoded by a 7 nucleotide repeat stretch occupies residues 3 to 93 (RLKTQDSRLK…QDSRLKTQDS (91 aa)). Acetyl-CoA-binding positions include 208-210 (DGH), R237, K243, K261, and K278.

Belongs to the transferase hexapeptide repeat family. Homotrimer. Hexamer formed by two homotrimers.

It carries out the reaction [N-acetyl-alpha-D-neuraminosyl-(2-&gt;8)](n) + n acetyl-CoA = [N,O(9)-diacetyl-alpha-D-neuraminosyl-(2-&gt;8)](n) + n CoA. The catalysed reaction is [N-acetyl-alpha-D-neuraminosyl-(2-&gt;8)](n) + n acetyl-CoA = [O(7),N-diacetyl-alpha-D-neuraminosyl-(2-&gt;8)](n) + n CoA. Its function is as follows. Catalyzes the O-acetylation of capsular polymeric sialic acid. Shows high substrate specificity toward polymers of sialic acid that contains a large number of residues. This chain is Polysialic acid O-acetyltransferase, found in Escherichia coli O1:K1 / APEC.